A 32-amino-acid chain; its full sequence is Delta-conotoxin EVIA (32 aa).

Intrachain disulfides connect C3-C21, C10-C25, and C20-C29. 4-hydroxyproline is present on P6. L32 carries the post-translational modification Leucine amide.

The protein belongs to the conotoxin O1 superfamily. In terms of tissue distribution, expressed by the venom duct.

Its subcellular location is the secreted. In terms of biological role, delta-conotoxins bind to site 6 of voltage-gated sodium channels and inhibit the inactivation process. This toxin inhibits sodium channel inactivation in neuronal membranes from amphibians and mammals (Nav1.2a/SCN1A, Nav1.3/SCN3A and Nav1.6/SCN8A) upon binding to receptor site 6. In Conus ermineus (Agate cone), this protein is Delta-conotoxin EVIA.